The sequence spans 644 residues: Arabinosyltransferase XEG113 (644 aa).

At 1–17 (MVEGWRNGFRDATNSKP) the chain is on the cytoplasmic side. Residues 18–38 (LFVTIYATVIIGVLVSSFYVF) traverse the membrane as a helical; Signal-anchor for type II membrane protein segment. At 39 to 644 (SAIYSPTNGS…QTPEEDHPPL (606 aa)) the chain is on the lumenal side. 2 N-linked (GlcNAc...) asparagine glycosylation sites follow: asparagine 46 and asparagine 70. The short motif at 226–228 (DTD) is the DXD motif element. 2 N-linked (GlcNAc...) asparagine glycosylation sites follow: asparagine 446 and asparagine 542.

It belongs to the glycosyltransferase 77 family.

It localises to the golgi apparatus membrane. In terms of biological role, plays a role in the arabinosylation of cell wall components. Involved in the arabinosylation of extensin proteins in root hair cells. Extensins are structural glycoproteins present in cell walls and its arabinosylation is important for cell elongation, root hair cell development, lateral root development and root hair tip growth. In Arabidopsis thaliana (Mouse-ear cress), this protein is Arabinosyltransferase XEG113.